Reading from the N-terminus, the 237-residue chain is 1-(5-phosphoribosyl)-5-[(5-phosphoribosylamino)methylideneamino] imidazole-4-carboxamide isomerase (237 aa).

The active-site Proton acceptor is the aspartate 8. The active-site Proton donor is the aspartate 130.

Belongs to the HisA/HisF family.

Its subcellular location is the cytoplasm. The enzyme catalyses 1-(5-phospho-beta-D-ribosyl)-5-[(5-phospho-beta-D-ribosylamino)methylideneamino]imidazole-4-carboxamide = 5-[(5-phospho-1-deoxy-D-ribulos-1-ylimino)methylamino]-1-(5-phospho-beta-D-ribosyl)imidazole-4-carboxamide. It participates in amino-acid biosynthesis; L-histidine biosynthesis; L-histidine from 5-phospho-alpha-D-ribose 1-diphosphate: step 4/9. This is 1-(5-phosphoribosyl)-5-[(5-phosphoribosylamino)methylideneamino] imidazole-4-carboxamide isomerase from Halothermothrix orenii (strain H 168 / OCM 544 / DSM 9562).